The following is a 1021-amino-acid chain: Replication factor C subunit 1 (1021 aa).

2 disordered regions span residues 1–259 (MSSD…EGAP) and 339–392 (PAKA…GSAS). Positions 90–110 (KVSDELEDDMKPLPAKEVHKE) are enriched in basic and acidic residues. A compositionally biased stretch (basic residues) spans 123–138 (SKRKTPVKPPPSKKLK). Over residues 197 to 207 (LDDDGEEDKMD) the composition is skewed to acidic residues. Over residues 219-236 (RGRGGASGGRGRGGGGRG) the composition is skewed to gly residues. Composition is skewed to basic and acidic residues over residues 241 to 255 (GERK…KEVP) and 347 to 357 (HQSDKNSEKQQ). A BRCT domain is found at 257–347 (GAPDCLTGLT…KPAKATVAKH (91 aa)). A compositionally biased stretch (polar residues) spans 374-392 (NQITTGKNISPKSNKGSAS). Position 465-472 (465-472 (SGPPGIGK)) interacts with ATP. Positions 931-1021 (VGESLPEENG…AGGSGGKRKR (91 aa)) are disordered. Residues 945–958 (EGDEEDSSDAENND) are compositionally biased toward acidic residues. Positions 965–977 (TKPKLDLQSDKKK) are enriched in basic and acidic residues. Residues 999-1010 (AGRSKASGSAGK) are compositionally biased toward low complexity. Residues 1011 to 1021 (AAGGSGGKRKR) are compositionally biased toward gly residues.

It belongs to the activator 1 large subunit family. As to quaternary structure, heterotetramer of subunits RFC2, RFC3, RFC4 and RFC5 that can form a complex with RFC1. Expressed in roots, leaves, shoot apical meristem (SAM), flag leaves and panicles.

Its subcellular location is the nucleus. Functionally, may be involved in DNA replication and thus regulate cell proliferation. This is Replication factor C subunit 1 (RFC1) from Oryza sativa subsp. japonica (Rice).